Consider the following 274-residue polypeptide: Thiamine kinase (274 aa).

The protein belongs to the thiamine kinase family.

It catalyses the reaction thiamine + ATP = thiamine phosphate + ADP + H(+). The protein operates within cofactor biosynthesis; thiamine diphosphate biosynthesis; thiamine phosphate from thiamine: step 1/1. Its function is as follows. Catalyzes the ATP-dependent phosphorylation of thiamine to thiamine phosphate. Is involved in thiamine salvage. The polypeptide is Thiamine kinase (Salmonella choleraesuis (strain SC-B67)).